The chain runs to 931 residues: Protein translocase subunit SecA (931 aa).

ATP is bound by residues glutamine 87, 105-109 (GEGKT), and aspartate 515. Zn(2+) contacts are provided by cysteine 915, cysteine 917, cysteine 926, and histidine 927.

It belongs to the SecA family. In terms of assembly, monomer and homodimer. Part of the essential Sec protein translocation apparatus which comprises SecA, SecYEG and auxiliary proteins SecDF-YajC and YidC. Requires Zn(2+) as cofactor.

The protein localises to the cell inner membrane. It localises to the cytoplasm. The enzyme catalyses ATP + H2O + cellular proteinSide 1 = ADP + phosphate + cellular proteinSide 2.. Its function is as follows. Part of the Sec protein translocase complex. Interacts with the SecYEG preprotein conducting channel. Has a central role in coupling the hydrolysis of ATP to the transfer of proteins into and across the cell membrane, serving both as a receptor for the preprotein-SecB complex and as an ATP-driven molecular motor driving the stepwise translocation of polypeptide chains across the membrane. The polypeptide is Protein translocase subunit SecA (Burkholderia ambifaria (strain ATCC BAA-244 / DSM 16087 / CCUG 44356 / LMG 19182 / AMMD) (Burkholderia cepacia (strain AMMD))).